Here is a 344-residue protein sequence, read N- to C-terminus: tRNA N6-adenosine threonylcarbamoyltransferase (344 aa).

Fe cation is bound by residues His-113 and His-117. Substrate is bound by residues 135-139 (LVSGG), Asp-169, Gly-182, Asp-186, and Asn-278. Asp-306 is a binding site for Fe cation. The interval 325-344 (ESPISVGTDPSLSVETPQVF) is disordered. Polar residues predominate over residues 326–344 (SPISVGTDPSLSVETPQVF).

Belongs to the KAE1 / TsaD family. It depends on Fe(2+) as a cofactor.

The protein localises to the cytoplasm. It carries out the reaction L-threonylcarbamoyladenylate + adenosine(37) in tRNA = N(6)-L-threonylcarbamoyladenosine(37) in tRNA + AMP + H(+). Its function is as follows. Required for the formation of a threonylcarbamoyl group on adenosine at position 37 (t(6)A37) in tRNAs that read codons beginning with adenine. Is involved in the transfer of the threonylcarbamoyl moiety of threonylcarbamoyl-AMP (TC-AMP) to the N6 group of A37, together with TsaE and TsaB. TsaD likely plays a direct catalytic role in this reaction. The protein is tRNA N6-adenosine threonylcarbamoyltransferase of Corynebacterium glutamicum (strain R).